A 392-amino-acid polypeptide reads, in one-letter code: HORMA domain-containing protein 1 (392 aa).

Positions 25–227 (HQSLMFVKRL…TPFHTFRLKV (203 aa)) constitute an HORMA domain. The tract at residues 323 to 359 (SELDVSESKTRSGKIFQSKMVNGNNQQGQTSKENRKR) is disordered. Residues 341-353 (KMVNGNNQQGQTS) are compositionally biased toward polar residues. At serine 375 the chain carries Phosphoserine. Positions 381 to 384 (KKRR) match the Nuclear localization signal motif.

In terms of assembly, interacts with HORMAD2. Interacts with IHO1. Phosphorylated at Ser-375 in a SPO11-dependent manner. In terms of tissue distribution, specifically expressed in meiotic germ cells.

Its subcellular location is the nucleus. The protein localises to the chromosome. It localises to the cytoplasm. Functionally, plays a key role in meiotic progression. Regulates 3 different functions during meiosis: ensures that sufficient numbers of processed DNA double-strand breaks (DSBs) are available for successful homology search by increasing the steady-state numbers of single-stranded DSB ends. Promotes synaptonemal-complex formation independently of its role in homology search. Plays a key role in the male mid-pachytene checkpoint and the female meiotic prophase checkpoint: required for efficient build-up of ATR activity on unsynapsed chromosome regions, a process believed to form the basis of meiotic silencing of unsynapsed chromatin (MSUC) and meiotic prophase quality control in both sexes. This is HORMA domain-containing protein 1 from Mus musculus (Mouse).